The sequence spans 2135 residues: Protein SUBSTANDARD STARCH GRAIN 4, chloroplastic (2135 aa).

Low complexity-rich tracts occupy residues methionine 1–phenylalanine 10 and glutamine 72–glutamine 84. A chloroplast-targeting transit peptide spans methionine 1–valine 42. Disordered stretches follow at residues methionine 1–arginine 44 and serine 58–proline 89. Topologically, residues alanine 43 to glycine 104 are stromal. A helical transmembrane segment spans residues leucine 105–tryptophan 125. At tyrosine 126–glycine 2135 the chain is on the chloroplast intermembrane side. Positions arginine 361–serine 370 are enriched in basic residues. Disordered regions lie at residues arginine 361–glutamine 382, serine 401–glutamate 492, and phenylalanine 1843–proline 1869. Composition is skewed to polar residues over residues isoleucine 373–glutamine 382, asparagine 454–valine 490, and serine 1846–serine 1856. Residues glutamate 1857–serine 1866 are compositionally biased toward basic and acidic residues.

It belongs to the TamB family. In terms of assembly, part of the TIC complex, which can interact with components of the TOC complex to form a larger import complex. As to expression, highly expressed in third leaf and developing seeds. Expressed in anthers, pistils, flag leaves and young panicles.

It is found in the plastid. The protein localises to the chloroplast inner membrane. Its subcellular location is the chloroplast intermembrane space. It localises to the chloroplast. The protein resides in the amyloplast. Part of the inner chloroplast membrane translocon complex (TIC) which associates with the outer chloroplast membrane translocon complex (TOC) and forms a supercomplex involved in protein precursor import into the chloroplast stroma. Required for the regulation of starch granule size in amyloplasts. This Oryza sativa subsp. japonica (Rice) protein is Protein SUBSTANDARD STARCH GRAIN 4, chloroplastic.